A 464-amino-acid polypeptide reads, in one-letter code: GTPase Der (464 aa).

2 consecutive EngA-type G domains span residues 5-169 and 190-368; these read PTIA…KQKG and IKVA…RESH. Residues 11–18, 58–62, 121–124, 196–203, 243–247, and 308–311 each bind GTP; these read GRPNVGKS, DTGGI, NKAD, GRPNAGKS, DTAGM, and NKFD. The region spanning 369-461 is the KH-like domain; the sequence is NLPTTGQLNR…PVIFSARSRV (93 aa).

Belongs to the TRAFAC class TrmE-Era-EngA-EngB-Septin-like GTPase superfamily. EngA (Der) GTPase family. As to quaternary structure, associates with the 50S ribosomal subunit.

GTPase that plays an essential role in the late steps of ribosome biogenesis. This Akkermansia muciniphila (strain ATCC BAA-835 / DSM 22959 / JCM 33894 / BCRC 81048 / CCUG 64013 / CIP 107961 / Muc) protein is GTPase Der.